A 140-amino-acid polypeptide reads, in one-letter code: Holo-[acyl-carrier-protein] synthase (140 aa).

Residues D7 and E58 each contribute to the Mg(2+) site.

This sequence belongs to the P-Pant transferase superfamily. AcpS family. Mg(2+) serves as cofactor.

It is found in the cytoplasm. It catalyses the reaction apo-[ACP] + CoA = holo-[ACP] + adenosine 3',5'-bisphosphate + H(+). Its function is as follows. Transfers the 4'-phosphopantetheine moiety from coenzyme A to a Ser of acyl-carrier-protein. The protein is Holo-[acyl-carrier-protein] synthase of Chloroflexus aggregans (strain MD-66 / DSM 9485).